The sequence spans 245 residues: tRNA pseudouridine synthase A (245 aa).

The Nucleophile role is filled by aspartate 52. Tyrosine 111 contacts substrate.

This sequence belongs to the tRNA pseudouridine synthase TruA family. In terms of assembly, homodimer.

The catalysed reaction is uridine(38/39/40) in tRNA = pseudouridine(38/39/40) in tRNA. Its function is as follows. Formation of pseudouridine at positions 38, 39 and 40 in the anticodon stem and loop of transfer RNAs. The sequence is that of tRNA pseudouridine synthase A from Nitrobacter hamburgensis (strain DSM 10229 / NCIMB 13809 / X14).